The primary structure comprises 388 residues: bZIP transcription factor 1-D (388 aa).

Disordered regions lie at residues 1–49, 103–249, 261–316, and 348–388; these read MGSS…PIPP, FAPY…GPTT, TASS…RKQA, and ELLS…KDTN. Composition is skewed to low complexity over residues 23–33 and 117–129; these read PPATSSTATPT and AAGTTTTAATAGG. Polar residues predominate over residues 169–179; the sequence is SGASANGTISQ. Positions 180-193 are enriched in low complexity; sequence SGESGSESSSEGSE. The segment covering 214–231 has biased composition (polar residues); it reads RSSQNGVSPSPSQAQLKQ. Positions 293–356 constitute a bZIP domain; sequence ELKRQKRKQS…DELLSKNSSL (64 aa). The basic motif stretch occupies residues 295-314; it reads KRQKRKQSNRDSARRSRLRK. Positions 302–316 are enriched in basic and acidic residues; it reads SNRDSARRSRLRKQA. Residues 321-356 form a leucine-zipper region; sequence LAQRAEVLKQENASLKDEVSRIRKEYDELLSKNSSL. Basic and acidic residues-rich tracts occupy residues 359-369 and 375-388; these read NVGDKQHKTDE and KLQHSGDDSQKDTN.

This sequence belongs to the bZIP family. In terms of tissue distribution, highly expressed in roots and at lower levels in stems and leaves.

The protein localises to the nucleus. In terms of biological role, probable transcription factor that may be involved in responses to fungal pathogen infection and abiotic stresses. In Triticum aestivum (Wheat), this protein is bZIP transcription factor 1-D.